The primary structure comprises 247 residues: UPF0273 protein PF1931 (247 aa).

Residues 3 to 247 enclose the KaiC domain; it reads RRVKTGIPGM…VLKRGRIYEL (245 aa). 30-37 is a binding site for ATP; it reads GGPGTGKS.

The protein belongs to the UPF0273 family.

In Pyrococcus furiosus (strain ATCC 43587 / DSM 3638 / JCM 8422 / Vc1), this protein is UPF0273 protein PF1931.